The primary structure comprises 147 residues: MRSLLILVLCFLPLAAPGKVYGRCELAAAMKRMGLDNYRGYSLGNWVCAAKFESNFNTGATNRNTDGSTDYGILQINSRWWCNDGRTPGSKNLCHIPCSALLSSDITASVNCAKKIVSDGNGMNAWVAWRKHCKGTDVNVWIRGCRL.

The N-terminal stretch at 1 to 17 (MRSLLILVLCFLPLAAP) is a signal peptide. Residues 19–147 (KVYGRCELAA…VNVWIRGCRL (129 aa)) form the C-type lysozyme domain. 4 disulfide bridges follow: cysteine 24–cysteine 145, cysteine 48–cysteine 133, cysteine 82–cysteine 98, and cysteine 94–cysteine 112. Residues glutamate 53 and aspartate 70 contribute to the active site.

It belongs to the glycosyl hydrolase 22 family. In terms of assembly, monomer. By an evolutionary shift in the site of proteolytic cleavage of prelysozyme, Gly-18 became the N-terminal residue of the mature protein instead of being the C-terminal residue of the signal sequence as in other birds.

It is found in the secreted. The enzyme catalyses Hydrolysis of (1-&gt;4)-beta-linkages between N-acetylmuramic acid and N-acetyl-D-glucosamine residues in a peptidoglycan and between N-acetyl-D-glucosamine residues in chitodextrins.. In terms of biological role, lysozymes have primarily a bacteriolytic function; those in tissues and body fluids are associated with the monocyte-macrophage system and enhance the activity of immunoagents. This Phasianus colchicus colchicus (Black-necked pheasant) protein is Lysozyme C (LYZ).